The following is a 550-amino-acid chain: Glycosyltransferase-like protein gnt12 (550 aa).

Positions 1-29 (MSYLPLYNNNNNINNNNNNNNNRINNNKE) are disordered. Topologically, residues 1–36 (MSYLPLYNNNNNINNNNNNNNNRINNNKEKGVKNKP) are cytoplasmic. The span at 8-25 (NNNNNINNNNNNNNNRIN) shows a compositional bias: low complexity. Residues 37 to 57 (FQIFISIVFIVFLCFFLIWSM) form a helical; Signal-anchor for type II membrane protein membrane-spanning segment. The Extracellular portion of the chain corresponds to 58–550 (EAKKDKNIKI…LFNEPLTNEC (493 aa)). The span at 81–97 (LINEPINNNKNNKNNIP) shows a compositional bias: low complexity. A disordered region spans residues 81 to 100 (LINEPINNNKNNKNNIPKNH). 3 N-linked (GlcNAc...) asparagine glycosylation sites follow: Asn233, Asn322, and Asn426.

Belongs to the glycosyltransferase 8 family. Highly divergent.

It localises to the membrane. The protein is Glycosyltransferase-like protein gnt12 (gnt12) of Dictyostelium discoideum (Social amoeba).